A 68-amino-acid chain; its full sequence is Probable tautomerase HP_0924 (68 aa).

The active-site Proton acceptor; via imino nitrogen is the P2.

It belongs to the 4-oxalocrotonate tautomerase family.

The sequence is that of Probable tautomerase HP_0924 from Helicobacter pylori (strain ATCC 700392 / 26695) (Campylobacter pylori).